We begin with the raw amino-acid sequence, 293 residues long: Elongation factor Ts (293 aa).

Residues 80 to 83 (TDFV) are involved in Mg(2+) ion dislocation from EF-Tu.

It belongs to the EF-Ts family.

It is found in the cytoplasm. Its function is as follows. Associates with the EF-Tu.GDP complex and induces the exchange of GDP to GTP. It remains bound to the aminoacyl-tRNA.EF-Tu.GTP complex up to the GTP hydrolysis stage on the ribosome. This is Elongation factor Ts from Paraburkholderia phymatum (strain DSM 17167 / CIP 108236 / LMG 21445 / STM815) (Burkholderia phymatum).